The primary structure comprises 147 residues: SsrA-binding protein (147 aa).

This sequence belongs to the SmpB family.

It localises to the cytoplasm. Required for rescue of stalled ribosomes mediated by trans-translation. Binds to transfer-messenger RNA (tmRNA), required for stable association of tmRNA with ribosomes. tmRNA and SmpB together mimic tRNA shape, replacing the anticodon stem-loop with SmpB. tmRNA is encoded by the ssrA gene; the 2 termini fold to resemble tRNA(Ala) and it encodes a 'tag peptide', a short internal open reading frame. During trans-translation Ala-aminoacylated tmRNA acts like a tRNA, entering the A-site of stalled ribosomes, displacing the stalled mRNA. The ribosome then switches to translate the ORF on the tmRNA; the nascent peptide is terminated with the 'tag peptide' encoded by the tmRNA and targeted for degradation. The ribosome is freed to recommence translation, which seems to be the essential function of trans-translation. In Thermosipho melanesiensis (strain DSM 12029 / CIP 104789 / BI429), this protein is SsrA-binding protein.